The primary structure comprises 339 residues: NADPH dehydrogenase (339 aa).

S24–C27 is an FMN binding site. Y29 contacts substrate. Residues A61 and Q103 each contribute to the FMN site. H165–H168 lines the substrate pocket. Residues R216 and A308 to R309 each bind FMN.

This sequence belongs to the NADH:flavin oxidoreductase/NADH oxidase family. NamA subfamily. In terms of assembly, homotetramer. The cofactor is FMN.

It catalyses the reaction A + NADPH + H(+) = AH2 + NADP(+). Its function is as follows. Catalyzes the reduction of the double bond of an array of alpha,beta-unsaturated aldehydes and ketones. It also reduces the nitro group of nitroester and nitroaromatic compounds. It could have a role in detoxification processes. This Bacillus licheniformis (strain ATCC 14580 / DSM 13 / JCM 2505 / CCUG 7422 / NBRC 12200 / NCIMB 9375 / NCTC 10341 / NRRL NRS-1264 / Gibson 46) protein is NADPH dehydrogenase.